The chain runs to 854 residues: Gamma-secretase-activating protein (854 aa).

It belongs to the GSAP family. In terms of assembly, interacts with APP; specifically interacts with the CTF-alpha product of APP. Interacts with the gamma-secretase complex. The protein is first synthesized as a holoprotein form of 98 kDa and rapidly processed into the gamma-secretase-activating protein 16 kDa C-terminal form, which constitutes the predominant form. In terms of tissue distribution, widely expressed.

The protein resides in the golgi apparatus. The protein localises to the trans-Golgi network. Functionally, regulator of gamma-secretase activity, which specifically activates the production of amyloid-beta protein (amyloid-beta protein 40 and amyloid-beta protein 42), without affecting the cleavage of other gamma-secretase targets such has Notch. The gamma-secretase complex is an endoprotease complex that catalyzes the intramembrane cleavage of integral membrane proteins such as Notch receptors and APP (amyloid-beta precursor protein). Specifically promotes the gamma-cleavage of APP CTF-alpha (also named APP-CTF) by the gamma-secretase complex to generate amyloid-beta, while it reduces the epsilon-cleavage of APP CTF-alpha, leading to a low production of AICD. In Homo sapiens (Human), this protein is Gamma-secretase-activating protein (GSAP).